The sequence spans 865 residues: Prominin-1 (865 aa).

The first 19 residues, 1 to 19 (MALVLGSLLLLGLCGNSFS), serve as a signal peptide directing secretion. Residues 20 to 108 (GGQPSSTDAP…GLKIVYYEAG (89 aa)) are Extracellular-facing. Residues 109-129 (IILCCVLGLLFIILMPLVGYF) form a helical membrane-spanning segment. The Cytoplasmic segment spans residues 130 to 157 (FCMCRCCNKCGGEMHQRQKENGPFLRKC). A helical membrane pass occupies residues 158–178 (FAISLLVICIIISIGIFYGFV). Residues 179-433 (ANHQVRTRIK…LPTLEEYDSY (255 aa)) lie on the Extracellular side of the membrane. Asn220 carries N-linked (GlcNAc...) asparagine glycosylation. N6-acetyllysine occurs at positions 225, 257, and 264. 3 N-linked (GlcNAc...) asparagine glycosylation sites follow: Asn274, Asn395, and Asn414. Residues 434-454 (WWLGGLVICSLLTLIVIFYYL) form a helical membrane-spanning segment. Topologically, residues 455–486 (GLLCGVCGYDRHATPTTRGCVSNTGGVFLMVG) are cytoplasmic. A helical membrane pass occupies residues 487–507 (VGLSFLFCWILMIIVVLTFVF). Residues 508-792 (GANVEKLICE…LCSYIIDPLN (285 aa)) lie on the Extracellular side of the membrane. 4 N-linked (GlcNAc...) asparagine glycosylation sites follow: Asn548, Asn580, Asn729, and Asn730. The helical transmembrane segment at 793-813 (LFWFGIGKATVFLLPALIFAV) threads the bilayer. Residues 814-865 (KLAKYYRRMDSEDVYDDVETIPMKNMENGNNGYHKDHVYGIHNPVMTSPSQH) are Cytoplasmic-facing. Ser863 carries the phosphoserine modification.

The protein belongs to the prominin family. Interacts with CDHR1 and with actin filaments. Interacts with NAT8 and NAT8B. In terms of processing, isoform 1 and isoform 2 are glycosylated. Post-translationally, acetylation at Lys-225, Lys-257 and Lys-264 by NAT8 and NAT8B may control PROM1 protein expression and its function in cell apoptosis. Isoform 1 is selectively expressed on CD34 hematopoietic stem and progenitor cells in adult and fetal bone marrow, fetal liver, cord blood and adult peripheral blood. Isoform 1 is not detected on other blood cells. Isoform 1 is also expressed in a number of non-lymphoid tissues including retina, pancreas, placenta, kidney, liver, lung, brain and heart. Found in saliva within small membrane particles. Isoform 2 is predominantly expressed in fetal liver, skeletal muscle, kidney, and heart as well as adult pancreas, kidney, liver, lung, and placenta. Isoform 2 is highly expressed in fetal liver, low in bone marrow, and barely detectable in peripheral blood. Isoform 2 is expressed on hematopoietic stem cells and in epidermal basal cells (at protein level). Expressed in adult retina by rod and cone photoreceptor cells (at protein level).

The protein localises to the apical cell membrane. It is found in the cell projection. It localises to the microvillus membrane. Its subcellular location is the cilium. The protein resides in the photoreceptor outer segment. The protein localises to the endoplasmic reticulum. It is found in the endoplasmic reticulum-Golgi intermediate compartment. Its function is as follows. May play a role in cell differentiation, proliferation and apoptosis. Binds cholesterol in cholesterol-containing plasma membrane microdomains and may play a role in the organization of the apical plasma membrane in epithelial cells. During early retinal development acts as a key regulator of disk morphogenesis. Involved in regulation of MAPK and Akt signaling pathways. In neuroblastoma cells suppresses cell differentiation such as neurite outgrowth in a RET-dependent manner. The sequence is that of Prominin-1 (PROM1) from Homo sapiens (Human).